Here is a 93-residue protein sequence, read N- to C-terminus: Mitochondrial import inner membrane translocase subunit TIM10 (93 aa).

An interaction with transmembrane regions of transmembrane proteins in transit region spans residues 1-31 (MSFLGFGGGQPQLSSQQKIQAAEAELDLVTD). The Twin CX3C motif signature appears at 40–65 (CYKKCINTSYSEGELNKNESSCLDRC). 2 disulfides stabilise this stretch: C40-C65 and C44-C61. The required for heterohexamerization stretch occupies residues 73–93 (NVQVGENMQKMGQSFNAAGKF).

This sequence belongs to the small Tim family. In terms of assembly, heterohexamer; composed of 3 copies of TIM9 and 3 copies of TIM10, named soluble 70 kDa complex. Associates directly with the TIM12 component of the TIM22 complex, whose core is composed of TIM18, TIM22 and TIM54. Interacts with the transmembrane regions of multi-pass transmembrane proteins in transit.

It localises to the mitochondrion inner membrane. Its subcellular location is the mitochondrion intermembrane space. Its function is as follows. Mitochondrial intermembrane chaperone that participates in the import and insertion of multi-pass transmembrane proteins into the mitochondrial inner membrane. Also required for the transfer of beta-barrel precursors from the TOM complex to the sorting and assembly machinery (SAM complex) of the outer membrane. Acts as a chaperone-like protein that protects the hydrophobic precursors from aggregation and guide them through the mitochondrial intermembrane space. Compared to TIM9, it may function as a substrate sensor. The sequence is that of Mitochondrial import inner membrane translocase subunit TIM10 (TIM10) from Saccharomyces cerevisiae (strain ATCC 204508 / S288c) (Baker's yeast).